A 377-amino-acid chain; its full sequence is Nitric oxide reductase FlRd-NAD(+) reductase (377 aa).

It belongs to the FAD-dependent oxidoreductase family. It depends on FAD as a cofactor.

It is found in the cytoplasm. The enzyme catalyses 2 reduced [nitric oxide reductase rubredoxin domain] + NAD(+) + H(+) = 2 oxidized [nitric oxide reductase rubredoxin domain] + NADH. The protein operates within nitrogen metabolism; nitric oxide reduction. One of at least two accessory proteins for anaerobic nitric oxide (NO) reductase. Reduces the rubredoxin moiety of NO reductase. The polypeptide is Nitric oxide reductase FlRd-NAD(+) reductase (Salmonella agona (strain SL483)).